Consider the following 443-residue polypeptide: UDP-N-acetylmuramate--L-alanine ligase (443 aa).

An ATP-binding site is contributed by 110–116 (GAHGKTS).

Belongs to the MurCDEF family.

Its subcellular location is the cytoplasm. It carries out the reaction UDP-N-acetyl-alpha-D-muramate + L-alanine + ATP = UDP-N-acetyl-alpha-D-muramoyl-L-alanine + ADP + phosphate + H(+). It functions in the pathway cell wall biogenesis; peptidoglycan biosynthesis. Cell wall formation. The chain is UDP-N-acetylmuramate--L-alanine ligase from Streptococcus agalactiae serotype Ia (strain ATCC 27591 / A909 / CDC SS700).